The sequence spans 694 residues: N,N-dimethylglycine/sarcosine dehydrogenase (694 aa).

In the N-terminal section; belongs to the NADH:flavin oxidoreductase/NADH oxidase family. In terms of assembly, monomer. The purified enzyme exists in the form of a monomer, dimer or polymer under non-denaturing conditions, but only the monomeric protein exhibits enzyme activity. Requires FAD as cofactor. NAD(+) is required as a cofactor. NADP(+) serves as cofactor.

The protein resides in the cytoplasm. It carries out the reaction oxidized 2[4Fe-4S]-[ferredoxin] + N,N-dimethylglycine + H2O = reduced 2[4Fe-4S]-[ferredoxin] + sarcosine + formaldehyde + 2 H(+). The enzyme catalyses oxidized 2[4Fe-4S]-[ferredoxin] + sarcosine + H2O = reduced 2[4Fe-4S]-[ferredoxin] + formaldehyde + glycine + 2 H(+). Ca(2+) increases the activity by 12%, while the other metal ions tested have no or slightly inhibitory effects. The chelating agent EDTA inhibits the activity by 33%. Involved in degradation of glycine betaine. Catalyzes the demethylation of both N,N-dimethylglycine (DMG) and sarcosine, releasing formaldehyde and forming glycine as the final product. Does not show activity toward trimethylamine (TMA), histamine, glycine betaine (GB) or choline. The C-N bond in DMG is probably oxidized by removal of a hydride equivalent to form a labile imine intermediate, which is then spontaneously hydrolyzed in the presence of water, producing sarcosine and formaldehyde. The two protons subtracted from DMG are transferred to the non-covalently bound FAD, resulting in the reduced form of FAD, which is subsequently reoxidized by coupling with reduction of the enzyme-bound NAD(P)(+). Regeneration of NAD(P)(+) is achieved by electron transfer to the [4Fe-4S] cluster in the probable membrane-anchored ferredoxin csal_0991. This Chromohalobacter salexigens (strain ATCC BAA-138 / DSM 3043 / CIP 106854 / NCIMB 13768 / 1H11) protein is N,N-dimethylglycine/sarcosine dehydrogenase.